Reading from the N-terminus, the 229-residue chain is Large ribosomal subunit protein uL1 (229 aa).

Belongs to the universal ribosomal protein uL1 family. In terms of assembly, part of the 50S ribosomal subunit.

Its function is as follows. Binds directly to 23S rRNA. The L1 stalk is quite mobile in the ribosome, and is involved in E site tRNA release. In terms of biological role, protein L1 is also a translational repressor protein, it controls the translation of the L11 operon by binding to its mRNA. This chain is Large ribosomal subunit protein uL1, found in Streptococcus pyogenes serotype M1.